The chain runs to 121 residues: ATP synthase epsilon chain (121 aa).

It belongs to the ATPase epsilon chain family. As to quaternary structure, F-type ATPases have 2 components, CF(1) - the catalytic core - and CF(0) - the membrane proton channel. CF(1) has five subunits: alpha(3), beta(3), gamma(1), delta(1), epsilon(1). CF(0) has three main subunits: a, b and c.

The protein localises to the cell membrane. Functionally, produces ATP from ADP in the presence of a proton gradient across the membrane. In Mycobacterium avium (strain 104), this protein is ATP synthase epsilon chain.